The following is a 710-amino-acid chain: DNA polymerase epsilon subunit B (710 aa).

The segment at 116–167 (FLKRPNSPTDTEITTLSQGSATSVVNPDSHSPMMLEEGSPINSDSEPISEHE) is disordered. The span at 121–144 (NSPTDTEITTLSQGSATSVVNPDS) shows a compositional bias: polar residues.

It belongs to the DNA polymerase epsilon subunit B family. As to quaternary structure, heterotetramer. Consists of four subunits: POL2, DPB2, DPB3 and DPB4.

The protein localises to the nucleus. In terms of biological role, as accessory component of the DNA polymerase epsilon (DNA polymerase II) participates in chromosomal DNA replication. This Kluyveromyces lactis (strain ATCC 8585 / CBS 2359 / DSM 70799 / NBRC 1267 / NRRL Y-1140 / WM37) (Yeast) protein is DNA polymerase epsilon subunit B (DPB2).